We begin with the raw amino-acid sequence, 317 residues long: Acetyl-coenzyme A carboxylase carboxyl transferase subunit alpha (317 aa).

The CoA carboxyltransferase C-terminal domain maps to Leu-40–Ser-293.

The protein belongs to the AccA family. As to quaternary structure, acetyl-CoA carboxylase is a heterohexamer composed of biotin carboxyl carrier protein (AccB), biotin carboxylase (AccC) and two subunits each of ACCase subunit alpha (AccA) and ACCase subunit beta (AccD).

Its subcellular location is the cytoplasm. It catalyses the reaction N(6)-carboxybiotinyl-L-lysyl-[protein] + acetyl-CoA = N(6)-biotinyl-L-lysyl-[protein] + malonyl-CoA. It functions in the pathway lipid metabolism; malonyl-CoA biosynthesis; malonyl-CoA from acetyl-CoA: step 1/1. In terms of biological role, component of the acetyl coenzyme A carboxylase (ACC) complex. First, biotin carboxylase catalyzes the carboxylation of biotin on its carrier protein (BCCP) and then the CO(2) group is transferred by the carboxyltransferase to acetyl-CoA to form malonyl-CoA. This chain is Acetyl-coenzyme A carboxylase carboxyl transferase subunit alpha, found in Brucella melitensis biotype 2 (strain ATCC 23457).